A 105-amino-acid chain; its full sequence is Small cysteine and glycine repeat-containing protein 10 (105 aa).

The segment at 4-41 (CGCGGCGGRCSGGCGGGCGGGCGGGCGGGCGGCGGGCG) is 10 X 2 AA repeats of CG.

The protein belongs to the KRTAP type 28 family.

In terms of biological role, in the hair cortex, hair keratin intermediate filaments are embedded in an interfilamentous matrix, consisting of hair keratin-associated proteins (KRTAP), which are essential for the formation of a rigid and resistant hair shaft through their extensive disulfide bond cross-linking with abundant cysteine residues of hair keratins. The matrix proteins include the high-sulfur and high-glycine-tyrosine keratins. In Homo sapiens (Human), this protein is Small cysteine and glycine repeat-containing protein 10.